Consider the following 484-residue polypeptide: Serine protease HTR4 (484 aa).

The N-terminal stretch at 1-28 (MARPLQRPAGLGPFVLLWLLLPAPSGRG) is a signal peptide. The IGFBP N-terminal domain maps to 36–114 (PVPRCPAACE…GRPLGTCGCP (79 aa)). 8 disulfide bridges follow: C40–C66, C44–C68, C49–C69, C55–C72, C80–C94, C88–C111, C113–C132, and C121–C157. The region spanning 105–159 (GRPLGTCGCPAAGATVCGSDGRTYRSLCALRAENRAARLRGALPAVPVQKGDCGD) is the Kazal-like domain. Residues 209–369 (ASGFIVSEDG…IPSDRIRQFL (161 aa)) form a serine protease region. Catalysis depends on charge relay system residues H225, D255, and S333. The PDZ domain maps to 390 to 472 (LRMLPLTMNL…LSLLVRRKSQ (83 aa)).

This sequence belongs to the peptidase S1C family.

The protein resides in the secreted. Functionally, serine protease. The sequence is that of Serine protease HTR4 (HTRA4) from Bos taurus (Bovine).